We begin with the raw amino-acid sequence, 161 residues long: Phosphopantetheine adenylyltransferase (161 aa).

Residue Ser-8 participates in substrate binding. Residues 8-9 (SF) and His-16 contribute to the ATP site. Substrate-binding residues include Lys-40, Leu-72, and Arg-86. Residues 87–89 (GLR), Glu-97, and 122–128 (FSFVSSS) each bind ATP.

The protein belongs to the bacterial CoaD family. As to quaternary structure, homohexamer. It depends on Mg(2+) as a cofactor.

The protein resides in the cytoplasm. The catalysed reaction is (R)-4'-phosphopantetheine + ATP + H(+) = 3'-dephospho-CoA + diphosphate. The protein operates within cofactor biosynthesis; coenzyme A biosynthesis; CoA from (R)-pantothenate: step 4/5. Functionally, reversibly transfers an adenylyl group from ATP to 4'-phosphopantetheine, yielding dephospho-CoA (dPCoA) and pyrophosphate. The polypeptide is Phosphopantetheine adenylyltransferase (Thermotoga neapolitana (strain ATCC 49049 / DSM 4359 / NBRC 107923 / NS-E)).